Here is a 204-residue protein sequence, read N- to C-terminus: Large ribosomal subunit protein uL4 (204 aa).

The interval 49 to 75 (TKGRSDVSGGGKKPWRQKGRGGARAGS) is disordered.

The protein belongs to the universal ribosomal protein uL4 family. In terms of assembly, part of the 50S ribosomal subunit.

Its function is as follows. One of the primary rRNA binding proteins, this protein initially binds near the 5'-end of the 23S rRNA. It is important during the early stages of 50S assembly. It makes multiple contacts with different domains of the 23S rRNA in the assembled 50S subunit and ribosome. Functionally, forms part of the polypeptide exit tunnel. The polypeptide is Large ribosomal subunit protein uL4 (Campylobacter jejuni subsp. doylei (strain ATCC BAA-1458 / RM4099 / 269.97)).